Here is a 237-residue protein sequence, read N- to C-terminus: LexA repressor (237 aa).

Positions 26 to 46 form a DNA-binding region, H-T-H motif; that stretch reads FDEMKDALDLRSKSGIHRLIT. Active-site for autocatalytic cleavage activity residues include serine 158 and lysine 196.

This sequence belongs to the peptidase S24 family. As to quaternary structure, homodimer.

The catalysed reaction is Hydrolysis of Ala-|-Gly bond in repressor LexA.. Functionally, represses a number of genes involved in the response to DNA damage (SOS response), including recA and lexA. In the presence of single-stranded DNA, RecA interacts with LexA causing an autocatalytic cleavage which disrupts the DNA-binding part of LexA, leading to derepression of the SOS regulon and eventually DNA repair. The sequence is that of LexA repressor from Rhodopseudomonas palustris (strain BisB18).